The primary structure comprises 324 residues: Aquaporin-4 (324 aa).

Topologically, residues methionine 1 to lysine 36 are cytoplasmic. S-palmitoyl cysteine attachment occurs at residues cysteine 13 and cysteine 17. A helical membrane pass occupies residues alanine 37–isoleucine 57. The Extracellular segment spans residues asparagine 58–aspartate 69. Residues methionine 70–glycine 89 traverse the membrane as a helical segment. The Cytoplasmic segment spans residues histidine 90–glycine 93. The discontinuously helical intramembrane region spans glycine 94 to threonine 101. Positions asparagine 97 to alanine 99 match the NPA 1 motif. Topologically, residues valine 102–serine 115 are cytoplasmic. Serine 111 bears the Phosphoserine; by PKG mark. The helical transmembrane segment at valine 116–valine 136 threads the bilayer. Residues threonine 137 to threonine 155 lie on the Extracellular side of the membrane. Asparagine 153 carries N-linked (GlcNAc...) asparagine glycosylation. The chain crosses the membrane as a helical span at residues alanine 156 to alanine 176. The Cytoplasmic portion of the chain corresponds to serine 177–aspartate 184. Serine 180 is subject to Phosphoserine; by PKC. Residues valine 185–isoleucine 205 form a helical membrane-spanning segment. A glycan (N-linked (GlcNAc...) asparagine) is linked at asparagine 206. At asparagine 206–threonine 208 the chain is on the extracellular side. The segment at residues glycine 209 to valine 222 is an intramembrane region (discontinuously helical). Residues asparagine 213–alanine 215 carry the NPA 2 motif. At isoleucine 223 to tryptophan 231 the chain is on the extracellular side. A helical transmembrane segment spans residues isoleucine 232–phenylalanine 252. At cysteine 253–histidine 324 the chain is on the cytoplasmic side. Phosphoserine is present on residues serine 276 and serine 285. The residue at position 289 (threonine 289) is a Phosphothreonine. Residues aspartate 305–serine 316 show a composition bias toward basic and acidic residues. Residues aspartate 305–histidine 324 are disordered.

The protein belongs to the MIP/aquaporin (TC 1.A.8) family. Homotetramer. The tetramers can form oligomeric arrays in membranes. The size of the oligomers differs between tissues and is smaller in skeletal muscle than in brain. Interaction between AQP4 oligomeric arrays in close-by cells can contribute to cell-cell adhesion. Part of a complex containing MLC1, TRPV4, HEPACAM and ATP1B1. Post-translationally, phosphorylation by PKC at Ser-180 reduces conductance by 50%. Phosphorylation by PKG at Ser-111 in response to glutamate increases conductance by 40%. In terms of processing, isoform 2: Palmitoylated on its N-terminal region. Isoform 1: Not palmitoylated. As to expression, not expressed in kidney, Detectable in gastric parietal and brain astroglial cells. The absence of AQP4 in kidney may be critical for the extreme urinary concentration that occurs in this species (up to 5,000 mosmol/kg H(2)O).

It is found in the cell membrane. Its subcellular location is the basolateral cell membrane. The protein resides in the endosome membrane. The protein localises to the sarcolemma. It localises to the cell projection. The enzyme catalyses H2O(in) = H2O(out). Forms a water-specific channel. Plays an important role in brain water homeostasis and in glymphatic solute transport. Required for a normal rate of water exchange across the blood brain interface. Required for normal levels of cerebrospinal fluid influx into the brain cortex and parenchyma along paravascular spaces that surround penetrating arteries, and for normal drainage of interstitial fluid along paravenous drainage pathways. Thereby, it is required for normal clearance of solutes from the brain interstitial fluid, including soluble beta-amyloid peptides derived from APP. Plays a redundant role in urinary water homeostasis and urinary concentrating ability. The protein is Aquaporin-4 (AQP4) of Dipodomys merriami (Merriam's kangaroo rat).